Reading from the N-terminus, the 375-residue chain is Alanine racemase (375 aa).

Lysine 35 functions as the Proton acceptor; specific for D-alanine in the catalytic mechanism. Position 35 is an N6-(pyridoxal phosphate)lysine (lysine 35). Arginine 130 contributes to the substrate binding site. The active-site Proton acceptor; specific for L-alanine is tyrosine 253. Residue methionine 305 coordinates substrate.

Belongs to the alanine racemase family. The cofactor is pyridoxal 5'-phosphate.

It carries out the reaction L-alanine = D-alanine. The protein operates within amino-acid biosynthesis; D-alanine biosynthesis; D-alanine from L-alanine: step 1/1. Functionally, catalyzes the interconversion of L-alanine and D-alanine. May also act on other amino acids. The polypeptide is Alanine racemase (alr) (Ralstonia nicotianae (strain ATCC BAA-1114 / GMI1000) (Ralstonia solanacearum)).